The sequence spans 147 residues: Nucleoside diphosphate kinase (147 aa).

The ATP site is built by lysine 9, phenylalanine 57, arginine 85, threonine 91, arginine 102, and asparagine 112. Histidine 115 functions as the Pros-phosphohistidine intermediate in the catalytic mechanism.

The protein belongs to the NDK family. In terms of assembly, homotetramer. Requires Mg(2+) as cofactor.

It localises to the cytoplasm. It carries out the reaction a 2'-deoxyribonucleoside 5'-diphosphate + ATP = a 2'-deoxyribonucleoside 5'-triphosphate + ADP. The catalysed reaction is a ribonucleoside 5'-diphosphate + ATP = a ribonucleoside 5'-triphosphate + ADP. Functionally, major role in the synthesis of nucleoside triphosphates other than ATP. The ATP gamma phosphate is transferred to the NDP beta phosphate via a ping-pong mechanism, using a phosphorylated active-site intermediate. This Listeria welshimeri serovar 6b (strain ATCC 35897 / DSM 20650 / CCUG 15529 / CIP 8149 / NCTC 11857 / SLCC 5334 / V8) protein is Nucleoside diphosphate kinase.